The sequence spans 495 residues: ATP synthase subunit beta, chloroplastic (495 aa).

172–179 (GGAGVGKT) lines the ATP pocket.

The protein belongs to the ATPase alpha/beta chains family. As to quaternary structure, F-type ATPases have 2 components, CF(1) - the catalytic core - and CF(0) - the membrane proton channel. CF(1) has five subunits: alpha(3), beta(3), gamma(1), delta(1), epsilon(1). CF(0) has four main subunits: a(1), b(1), b'(1) and c(9-12).

The protein localises to the plastid. It is found in the chloroplast thylakoid membrane. The catalysed reaction is ATP + H2O + 4 H(+)(in) = ADP + phosphate + 5 H(+)(out). Functionally, produces ATP from ADP in the presence of a proton gradient across the membrane. The catalytic sites are hosted primarily by the beta subunits. This is ATP synthase subunit beta, chloroplastic from Convallaria majalis (Lily of the valley).